The chain runs to 182 residues: UPF0149 protein HI_0817 (182 aa).

Belongs to the UPF0149 family.

The chain is UPF0149 protein HI_0817 from Haemophilus influenzae (strain ATCC 51907 / DSM 11121 / KW20 / Rd).